The chain runs to 774 residues: Beta-xylosidase/alpha-L-arabinofuranosidase 1 (774 aa).

A signal peptide spans 1–33; it reads ANTKNREPKVSSVFLCFSIFYVTVLLNCNHVYG. N-linked (GlcNAc...) asparagine glycosylation is found at asparagine 48 and asparagine 136. Residue aspartate 303 is part of the active site. Asparagine 437 and asparagine 530 each carry an N-linked (GlcNAc...) asparagine glycan.

This sequence belongs to the glycoside hydrolase 3 family. Proteolytically cleaved in roots to form a 65 kDa protein.

The protein localises to the secreted. The protein resides in the extracellular space. It is found in the extracellular matrix. The enzyme catalyses Hydrolysis of (1-&gt;4)-beta-D-xylans, to remove successive D-xylose residues from the non-reducing termini.. It carries out the reaction Hydrolysis of terminal non-reducing alpha-L-arabinofuranoside residues in alpha-L-arabinosides.. Functionally, a bifunctional beta-xylosidase/alpha-L-arabinosidase, exo-enzyme that acts synergistically with endohydrolases. Releases xylose and arabinose from cell walls. Does not cleave xylan from oat spelts although xylan from oat spelts was degraded to xylose when this enzyme was used in combination with xylanase. Also releases xylose and arabinose from aryl glycosides, xylo-oligosaccharides, arabinan from sugar beet and arabino-oligosaccharides, arabinan from sugar beet and arabinoxylan from wheat. The chain is Beta-xylosidase/alpha-L-arabinofuranosidase 1 from Medicago sativa subsp. varia (Alfalfa).